The chain runs to 230 residues: Ribosomal RNA small subunit methyltransferase Nep1 (230 aa).

S-adenosyl-L-methionine is bound by residues G184, G189, and 205-210; that span reads IYNKPL.

Belongs to the class IV-like SAM-binding methyltransferase superfamily. RNA methyltransferase NEP1 family. Homodimer.

The enzyme catalyses a pseudouridine in rRNA + S-adenosyl-L-methionine = an N(1)-methylpseudouridine in rRNA + S-adenosyl-L-homocysteine + H(+). Its function is as follows. Methyltransferase involved in ribosomal biogenesis. Specifically catalyzes the N1-methylation of the pseudouridine corresponding to position 914 in M.jannaschii 16S rRNA. The polypeptide is Ribosomal RNA small subunit methyltransferase Nep1 (Staphylothermus marinus (strain ATCC 43588 / DSM 3639 / JCM 9404 / F1)).